The following is a 307-amino-acid chain: Putative gluconeogenesis factor (307 aa).

It belongs to the gluconeogenesis factor family.

It localises to the cytoplasm. Its function is as follows. Required for morphogenesis under gluconeogenic growth conditions. This is Putative gluconeogenesis factor from Yersinia pestis.